The chain runs to 359 residues: MRSIRKRWTICTISLLLIFYKTKEIARTEEHQETQLIGDGELSLSRSLVNSSDKIIRKAGSSIFQHNVEGWKINSSLVLEIRKNILRFLDAERDVSVVKSSFKPGDVIHYVLDRRRTLNISHDLHSLLPEVSPMKNRRFKTCAVVGNSGILLDSECGKEIDSHNFVIRCNLAPVVEFAADVGTKSDFITMNPSVVQRAFGGFRNESDREKFVHRLSMLNDSVLWIPAFMVKGGEKHVEWVNALILKNKLKVRTAYPSLRLIHAVRGYWLTNKVPIKRPSTGLLMYTLATRFCDEIHLYGFWPFPKDLNGKAVKYHYYDDLKYRYFSNASPHRMPLEFKTLNVLHNRGALKLTTGKCVKQ.

At 1 to 7 (MRSIRKR) the chain is on the cytoplasmic side. Residues 8–20 (WTICTISLLLIFY) traverse the membrane as a helical; Signal-anchor for type II membrane protein segment. Over 21 to 359 (KTKEIARTEE…KLTTGKCVKQ (339 aa)) the chain is Lumenal. N50, N74, and N119 each carry an N-linked (GlcNAc...) asparagine glycan. Disulfide bonds link C142/C292 and C156/C356. CMP-N-acetyl-beta-neuraminate-binding residues include N147 and N170. N-linked (GlcNAc...) asparagine glycans are attached at residues N204 and N219. CMP-N-acetyl-beta-neuraminate-binding residues include S279, T280, G281, and W301. The Proton donor/acceptor role is filled by H331.

It belongs to the glycosyltransferase 29 family. Post-translationally, autopolysialylated.

It localises to the golgi apparatus membrane. The protein localises to the secreted. It carries out the reaction [N-acetyl-alpha-D-neuraminosyl-(2-&gt;8)](n) + CMP-N-acetyl-beta-neuraminate = [N-acetyl-alpha-D-neuraminosyl-(2-&gt;8)](n+1) + CMP + H(+). Catalyzes the transfer of a sialic acid from a CMP-linked sialic acid donor onto a terminal alpha-2,3-, alpha-2,6-, or alpha-2,8-linked sialic acid of an N-linked glycan protein acceptor through alpha-2,8-linkages. Therefore, participates in polysialic acid synthesis on various sialylated N-acetyllactosaminyl oligosaccharides, including NCAM1 N-glycans, FETUB N-glycans and AHSG. It is noteworthy that alpha-2,3-linked sialic acid is apparently a better acceptor than alpha-2,6-linked sialic acid. The sequence is that of CMP-N-acetylneuraminate-poly-alpha-2,8-sialyltransferase (ST8SIA4) from Pan troglodytes (Chimpanzee).